The chain runs to 525 residues: Vanin-like protein 2 (525 aa).

The N-terminal stretch at 1-27 is a signal peptide; sequence MAKNYWGFFLFCLALGLMLNLSQQASL. 2 N-linked (GlcNAc...) asparagine glycosylation sites follow: N20 and N61. A CN hydrolase domain is found at 33 to 303; it reads YTAGVVEFEP…RSIYVARVPK (271 aa). E72 serves as the catalytic Proton acceptor. N-linked (GlcNAc...) asparagine glycans are attached at residues N99, N116, and N124. The Proton donor role is filled by K167. N176 carries an N-linked (GlcNAc...) asparagine glycan. C199 serves as the catalytic Nucleophile. Residues N333, N348, and N375 are each glycosylated (N-linked (GlcNAc...) asparagine).

It belongs to the carbon-nitrogen hydrolase superfamily. BTD/VNN family. As to expression, expressed in third instar larvae.

It localises to the secreted. This chain is Vanin-like protein 2, found in Drosophila melanogaster (Fruit fly).